A 468-amino-acid chain; its full sequence is Ribulose bisphosphate carboxylase large chain (468 aa).

An N6,N6,N6-trimethyllysine modification is found at Lys-5. Positions 114 and 164 each coordinate substrate. Lys-166 serves as the catalytic Proton acceptor. A substrate-binding site is contributed by Lys-168. The Mg(2+) site is built by Lys-192, Asp-194, and Glu-195. Lys-192 is modified (N6-carboxylysine). His-285 functions as the Proton acceptor in the catalytic mechanism. Substrate-binding residues include Arg-286, His-318, and Ser-370.

The protein belongs to the RuBisCO large chain family. Type I subfamily. As to quaternary structure, heterohexadecamer of 8 large chains and 8 small chains; disulfide-linked. The disulfide link is formed within the large subunit homodimers. Mg(2+) serves as cofactor. The disulfide bond which can form in the large chain dimeric partners within the hexadecamer appears to be associated with oxidative stress and protein turnover.

It is found in the plastid. The protein localises to the chloroplast. It catalyses the reaction 2 (2R)-3-phosphoglycerate + 2 H(+) = D-ribulose 1,5-bisphosphate + CO2 + H2O. The catalysed reaction is D-ribulose 1,5-bisphosphate + O2 = 2-phosphoglycolate + (2R)-3-phosphoglycerate + 2 H(+). RuBisCO catalyzes two reactions: the carboxylation of D-ribulose 1,5-bisphosphate, the primary event in carbon dioxide fixation, as well as the oxidative fragmentation of the pentose substrate in the photorespiration process. Both reactions occur simultaneously and in competition at the same active site. The polypeptide is Ribulose bisphosphate carboxylase large chain (Nolana spathulata (Chilean bell flower)).